Reading from the N-terminus, the 156-residue chain is Small ribosomal subunit protein uS7 (156 aa).

This sequence belongs to the universal ribosomal protein uS7 family. Part of the 30S ribosomal subunit. Contacts proteins S9 and S11.

One of the primary rRNA binding proteins, it binds directly to 16S rRNA where it nucleates assembly of the head domain of the 30S subunit. Is located at the subunit interface close to the decoding center, probably blocks exit of the E-site tRNA. The sequence is that of Small ribosomal subunit protein uS7 from Laribacter hongkongensis (strain HLHK9).